A 154-amino-acid chain; its full sequence is Large ribosomal subunit protein uL11 (154 aa).

The protein belongs to the universal ribosomal protein uL11 family. Part of the ribosomal stalk of the 50S ribosomal subunit. Interacts with L10 and the large rRNA to form the base of the stalk. L10 forms an elongated spine to which L12 dimers bind in a sequential fashion forming a multimeric L10(L12)X complex. One or more lysine residues are methylated.

Its function is as follows. Forms part of the ribosomal stalk which helps the ribosome interact with GTP-bound translation factors. The polypeptide is Large ribosomal subunit protein uL11 (Leuconostoc mesenteroides subsp. mesenteroides (strain ATCC 8293 / DSM 20343 / BCRC 11652 / CCM 1803 / JCM 6124 / NCDO 523 / NBRC 100496 / NCIMB 8023 / NCTC 12954 / NRRL B-1118 / 37Y)).